A 70-amino-acid chain; its full sequence is MKPGIHPEYAEITANCTCGNVIKVNSTVGKDLHLDVCGACHPFYTGTQKVVDTGGRIDKFNKRFGMLGKK.

Positions 16, 18, 37, and 40 each coordinate Zn(2+).

The protein belongs to the bacterial ribosomal protein bL31 family. Type A subfamily. Part of the 50S ribosomal subunit. The cofactor is Zn(2+).

Its function is as follows. Binds the 23S rRNA. The sequence is that of Large ribosomal subunit protein bL31 from Shewanella oneidensis (strain ATCC 700550 / JCM 31522 / CIP 106686 / LMG 19005 / NCIMB 14063 / MR-1).